Reading from the N-terminus, the 149-residue chain is Large ribosomal subunit protein uL24 (149 aa).

The segment at 114–149 (RKIIERSGGTPEVEAVPEKSEEEKEEKEKEEEKSEE) is disordered. Positions 129 to 149 (VPEKSEEEKEEKEKEEEKSEE) are enriched in basic and acidic residues.

Belongs to the universal ribosomal protein uL24 family. Part of the 50S ribosomal subunit.

One of two assembly initiator proteins, it binds directly to the 5'-end of the 23S rRNA, where it nucleates assembly of the 50S subunit. Functionally, located at the polypeptide exit tunnel on the outside of the subunit. The chain is Large ribosomal subunit protein uL24 from Methanopyrus kandleri (strain AV19 / DSM 6324 / JCM 9639 / NBRC 100938).